A 361-amino-acid chain; its full sequence is Phospho-N-acetylmuramoyl-pentapeptide-transferase (361 aa).

10 consecutive transmembrane segments (helical) span residues 27-47 (ILAS…MIRW), 70-90 (GTPT…CLLW), 97-117 (SLWL…VDDY), 134-154 (YFWQ…NASL), 167-187 (TVTW…IVGS), 199-219 (GLAI…AYAS), 236-256 (TGEL…FLWY), 263-283 (VFMG…VAVV), 288-308 (LVLL…ILQV), and 338-358 (KVIV…LATL).

The protein belongs to the glycosyltransferase 4 family. MraY subfamily. Requires Mg(2+) as cofactor.

The protein resides in the cell inner membrane. It catalyses the reaction UDP-N-acetyl-alpha-D-muramoyl-L-alanyl-gamma-D-glutamyl-meso-2,6-diaminopimeloyl-D-alanyl-D-alanine + di-trans,octa-cis-undecaprenyl phosphate = di-trans,octa-cis-undecaprenyl diphospho-N-acetyl-alpha-D-muramoyl-L-alanyl-D-glutamyl-meso-2,6-diaminopimeloyl-D-alanyl-D-alanine + UMP. It participates in cell wall biogenesis; peptidoglycan biosynthesis. Catalyzes the initial step of the lipid cycle reactions in the biosynthesis of the cell wall peptidoglycan: transfers peptidoglycan precursor phospho-MurNAc-pentapeptide from UDP-MurNAc-pentapeptide onto the lipid carrier undecaprenyl phosphate, yielding undecaprenyl-pyrophosphoryl-MurNAc-pentapeptide, known as lipid I. This is Phospho-N-acetylmuramoyl-pentapeptide-transferase from Legionella pneumophila subsp. pneumophila (strain Philadelphia 1 / ATCC 33152 / DSM 7513).